Here is a 393-residue protein sequence, read N- to C-terminus: Isocitrate dehydrogenase [NADP] (393 aa).

D-threo-isocitrate-binding residues include Ser102, Asn104, Arg108, Arg118, and Arg142. Residue Asp283 participates in Mg(2+) binding.

Belongs to the isocitrate and isopropylmalate dehydrogenases family. In terms of assembly, homodimer. Mg(2+) serves as cofactor. The cofactor is Mn(2+).

It catalyses the reaction D-threo-isocitrate + NADP(+) = 2-oxoglutarate + CO2 + NADPH. In terms of biological role, catalyzes the oxidative decarboxylation of isocitrate to 2-oxoglutarate and carbon dioxide with the concomitant reduction of NADP(+). The sequence is that of Isocitrate dehydrogenase [NADP] (icd) from Streptococcus mutans serotype c (strain ATCC 700610 / UA159).